An 89-amino-acid polypeptide reads, in one-letter code: Meiosis expressed gene 1 protein homolog (89 aa).

It belongs to the MEIG1 family.

This is Meiosis expressed gene 1 protein homolog from Nematostella vectensis (Starlet sea anemone).